The chain runs to 466 residues: Muscarinic acetylcholine receptor M2 (466 aa).

Topologically, residues 1-22 (MNNSTNSSNSGLALTSPYKTFE) are extracellular. N2, N3, and N6 each carry an N-linked (GlcNAc...) asparagine glycan. Residues 23-45 (VVFIVLVAGSLSLVTIIGNILVM) traverse the membrane as a helical segment. The Cytoplasmic portion of the chain corresponds to 46-59 (VSIKVNRHLQTVNN). A helical transmembrane segment spans residues 60-80 (YFLFSLACADLIIGVFSMNLY). Residues 81–97 (TLYTVIGYWPLGPVVCD) are Extracellular-facing. A disulfide bond links C96 and C176. Residues 98-119 (LWLALDYVVSNASVMNLLIISF) form a helical membrane-spanning segment. The short motif at 120–122 (DRY) is the Important for signaling element. The Cytoplasmic segment spans residues 120-139 (DRYFCVTKPLTYPVKRTTKM). Residues 140 to 162 (AGMMIAAAWVLSFILWAPAILFW) form a helical membrane-spanning segment. The Extracellular portion of the chain corresponds to 163 to 184 (QFIVGVRTVEDGECYIQFFSNA). Residues 185 to 209 (AVTFGTAIAAFYLPVIIMTVLYWHI) form a helical membrane-spanning segment. Residues 210-387 (SRASKSRIKK…PPSREKKVTR (178 aa)) lie on the Cytoplasmic side of the membrane. The disordered stretch occupies residues 218-320 (KKDKKEPVAN…SLGHSKDENS (103 aa)). S232 carries the phosphoserine modification. A compositionally biased stretch (basic and acidic residues) spans 254–270 (ALEHNKIQNGKAPRDAV). Polar residues-rich tracts occupy residues 284 to 293 (NDSTSVSAVA) and 304 to 313 (DENTVSTSLG). Residues 388–410 (TILAILLAFIITWAPYNVMVLIN) traverse the membrane as a helical segment. At 411–418 (TFCAPCIP) the chain is on the extracellular side. C413 and C416 form a disulfide bridge. Residues 419–442 (NTVWTIGYWLCYINSTINPACYAL) form a helical membrane-spanning segment. The Important for signaling motif lies at 436 to 440 (NPACY). Residues 443–466 (CNATFKKTFKHLLMCHYKNIGATR) are Cytoplasmic-facing. 3 positions are modified to phosphothreonine: T446, T450, and T465.

It belongs to the G-protein coupled receptor 1 family. Muscarinic acetylcholine receptor subfamily. CHRM2 sub-subfamily. Interacts with ARRB1 and ARRB2. Interacts with RACK1; the interaction regulates CHRM2 internalization. Post-translationally, phosphorylated in response to agonist treatment.

The protein resides in the cell membrane. It is found in the postsynaptic cell membrane. Functionally, the muscarinic acetylcholine receptor mediates various cellular responses, including inhibition of adenylate cyclase, breakdown of phosphoinositides and modulation of potassium channels through the action of G proteins. Primary transducing effect is adenylate cyclase inhibition. In Sus scrofa (Pig), this protein is Muscarinic acetylcholine receptor M2 (CHRM2).